The following is a 340-amino-acid chain: Ferredoxin--NADP reductase (340 aa).

Residues threonine 20, aspartate 39, glutamine 47, tyrosine 52, valine 92, phenylalanine 126, aspartate 293, and threonine 334 each coordinate FAD.

It belongs to the ferredoxin--NADP reductase type 2 family. As to quaternary structure, homodimer. FAD is required as a cofactor.

The catalysed reaction is 2 reduced [2Fe-2S]-[ferredoxin] + NADP(+) + H(+) = 2 oxidized [2Fe-2S]-[ferredoxin] + NADPH. The sequence is that of Ferredoxin--NADP reductase from Gluconobacter oxydans (strain 621H) (Gluconobacter suboxydans).